The sequence spans 452 residues: MSLSVVILAAGKGTRMCSELPKVLHKIADKPMVQHVIDTVKSIGADSIHLIYGHGGQQLQEKISDGSLNWIKQAEQLGTGHAMQIALPHFKNDEKILMVYGDVPLLSEKTLTDLIAAQPPGGIGLLTVELDNPTGYGRIERMNGEVAGIVEQKDATVAQLSIKEVNTGILVADANDLSRWLPALSNENAAGEYYITDIIKMAHLEGRIISAVQPESATEVEGVNTRLQLANLERAYQLKKATELLLSGVMLRDPNRFDLRGTLTCGVDVEIDINVIIQGNVNLGNGVVIGANCILIDCDIAENAVIQANSIIEGSSIGARATIGPFARIRPQSVLKEEVHVGNFVEIKKSTLGNGTKCGHLSYIGDSTLGQRVNIGAGTITCNYDGVNKFHTHIGDDVFIGSDCQLIAPVTINNGATTGAGSTIMIDVPENALAIGRAKQRNINNWKRPTKK.

Positions M1–R226 are pyrophosphorylase. Residues L8–G11, K22, Q73, G78–T79, Y100–D102, G137, E151, N166, and N224 contribute to the UDP-N-acetyl-alpha-D-glucosamine site. Residue D102 coordinates Mg(2+). N224 provides a ligand contact to Mg(2+). A linker region spans residues L227–S247. Residues G248–K452 are N-acetyltransferase. UDP-N-acetyl-alpha-D-glucosamine is bound by residues R330 and K348. Catalysis depends on H360, which acts as the Proton acceptor. Residues Y363 and N374 each contribute to the UDP-N-acetyl-alpha-D-glucosamine site. Residues A377, N383–Y384, S402, A420, and R437 each bind acetyl-CoA.

This sequence in the N-terminal section; belongs to the N-acetylglucosamine-1-phosphate uridyltransferase family. The protein in the C-terminal section; belongs to the transferase hexapeptide repeat family. In terms of assembly, homotrimer. Mg(2+) serves as cofactor.

The protein localises to the cytoplasm. The catalysed reaction is alpha-D-glucosamine 1-phosphate + acetyl-CoA = N-acetyl-alpha-D-glucosamine 1-phosphate + CoA + H(+). The enzyme catalyses N-acetyl-alpha-D-glucosamine 1-phosphate + UTP + H(+) = UDP-N-acetyl-alpha-D-glucosamine + diphosphate. The protein operates within nucleotide-sugar biosynthesis; UDP-N-acetyl-alpha-D-glucosamine biosynthesis; N-acetyl-alpha-D-glucosamine 1-phosphate from alpha-D-glucosamine 6-phosphate (route II): step 2/2. It functions in the pathway nucleotide-sugar biosynthesis; UDP-N-acetyl-alpha-D-glucosamine biosynthesis; UDP-N-acetyl-alpha-D-glucosamine from N-acetyl-alpha-D-glucosamine 1-phosphate: step 1/1. It participates in bacterial outer membrane biogenesis; LPS lipid A biosynthesis. In terms of biological role, catalyzes the last two sequential reactions in the de novo biosynthetic pathway for UDP-N-acetylglucosamine (UDP-GlcNAc). The C-terminal domain catalyzes the transfer of acetyl group from acetyl coenzyme A to glucosamine-1-phosphate (GlcN-1-P) to produce N-acetylglucosamine-1-phosphate (GlcNAc-1-P), which is converted into UDP-GlcNAc by the transfer of uridine 5-monophosphate (from uridine 5-triphosphate), a reaction catalyzed by the N-terminal domain. The chain is Bifunctional protein GlmU from Psychromonas ingrahamii (strain DSM 17664 / CCUG 51855 / 37).